The following is a 186-amino-acid chain: ATP synthase subunit delta (186 aa).

The protein belongs to the ATPase delta chain family. F-type ATPases have 2 components, F(1) - the catalytic core - and F(0) - the membrane proton channel. F(1) has five subunits: alpha(3), beta(3), gamma(1), delta(1), epsilon(1). F(0) has three main subunits: a(1), b(2) and c(10-14). The alpha and beta chains form an alternating ring which encloses part of the gamma chain. F(1) is attached to F(0) by a central stalk formed by the gamma and epsilon chains, while a peripheral stalk is formed by the delta and b chains.

It is found in the cell inner membrane. In terms of biological role, f(1)F(0) ATP synthase produces ATP from ADP in the presence of a proton or sodium gradient. F-type ATPases consist of two structural domains, F(1) containing the extramembraneous catalytic core and F(0) containing the membrane proton channel, linked together by a central stalk and a peripheral stalk. During catalysis, ATP synthesis in the catalytic domain of F(1) is coupled via a rotary mechanism of the central stalk subunits to proton translocation. This protein is part of the stalk that links CF(0) to CF(1). It either transmits conformational changes from CF(0) to CF(1) or is implicated in proton conduction. In Nitrobacter hamburgensis (strain DSM 10229 / NCIMB 13809 / X14), this protein is ATP synthase subunit delta.